Reading from the N-terminus, the 340-residue chain is tRNA (cytosine(34)-C(5))-methyltransferase, mitochondrial (340 aa).

Residues C139–K145, E162, D193, and D211 each bind S-adenosyl-L-methionine. Residue C265 is the Nucleophile of the active site.

The protein belongs to the class I-like SAM-binding methyltransferase superfamily. RsmB/NOP family.

It localises to the mitochondrion matrix. The enzyme catalyses cytidine(34) in mitochondrial tRNA + S-adenosyl-L-methionine = 5-methylcytidine(34) in mitochondrial tRNA + S-adenosyl-L-homocysteine + H(+). In terms of biological role, mitochondrial tRNA methyltransferase that mediates methylation of cytosine to 5-methylcytosine (m5C) at position 34 of mt-tRNA(Met). mt-tRNA(Met) methylation at cytosine(34) takes place at the wobble position of the anticodon and initiates the formation of 5-formylcytosine (f(5)c) at this position. mt-tRNA(Met) containing the f(5)c modification at the wobble position enables recognition of the AUA codon in addition to the AUG codon, expanding codon recognition in mitochondrial translation. The protein is tRNA (cytosine(34)-C(5))-methyltransferase, mitochondrial of Homo sapiens (Human).